The chain runs to 279 residues: Diaminopimelate epimerase (279 aa).

Substrate is bound by residues Asn-11 and Asn-63. Cys-72 serves as the catalytic Proton donor. Substrate contacts are provided by residues 73–74, Asn-161, Asn-194, and 212–213; these read GN and ER. Residue Cys-221 is the Proton acceptor of the active site. 222-223 is a substrate binding site; sequence GT.

It belongs to the diaminopimelate epimerase family. Homodimer.

The protein resides in the cytoplasm. It catalyses the reaction (2S,6S)-2,6-diaminopimelate = meso-2,6-diaminopimelate. Its pathway is amino-acid biosynthesis; L-lysine biosynthesis via DAP pathway; DL-2,6-diaminopimelate from LL-2,6-diaminopimelate: step 1/1. Its function is as follows. Catalyzes the stereoinversion of LL-2,6-diaminopimelate (L,L-DAP) to meso-diaminopimelate (meso-DAP), a precursor of L-lysine and an essential component of the bacterial peptidoglycan. The protein is Diaminopimelate epimerase of Moorella thermoacetica (strain ATCC 39073 / JCM 9320).